Consider the following 162-residue polypeptide: Putative 4-hydroxy-4-methyl-2-oxoglutarate aldolase (162 aa).

Residues 75 to 78 (GDML) and Arg-97 each bind substrate. Asp-98 lines the a divalent metal cation pocket.

The protein belongs to the class II aldolase/RraA-like family. In terms of assembly, homotrimer. Requires a divalent metal cation as cofactor.

The enzyme catalyses 4-hydroxy-4-methyl-2-oxoglutarate = 2 pyruvate. It carries out the reaction oxaloacetate + H(+) = pyruvate + CO2. Catalyzes the aldol cleavage of 4-hydroxy-4-methyl-2-oxoglutarate (HMG) into 2 molecules of pyruvate. Also contains a secondary oxaloacetate (OAA) decarboxylase activity due to the common pyruvate enolate transition state formed following C-C bond cleavage in the retro-aldol and decarboxylation reactions. The polypeptide is Putative 4-hydroxy-4-methyl-2-oxoglutarate aldolase (Azotobacter vinelandii (strain DJ / ATCC BAA-1303)).